Consider the following 328-residue polypeptide: Embigin (328 aa).

An N-terminal signal peptide occupies residues 1–33; that stretch reads MRSHTGLRALVAPGCSLLLLYLLAATRPDRAVG. The Extracellular portion of the chain corresponds to 34 to 264; the sequence is DPADSAFTSL…VLSFMVPLKP (231 aa). N-linked (GlcNAc...) asparagine glycosylation is found at Asn55, Asn62, Asn75, Asn100, Asn117, Asn189, Asn196, Asn214, and Asn219. Ig-like domains follow at residues 67–160 and 159–254; these read EQTR…RVPK and PKVH…IKLV. 2 cysteine pairs are disulfide-bonded: Cys88-Cys144 and Cys180-Cys238. The chain crosses the membrane as a helical span at residues 265 to 285; that stretch reads FLAIIAEVILLVAIILLCEVY. Residues 286–328 are Cytoplasmic-facing; it reads TQKKKNDPDDGKEFEQIEQLKSDDSNGIENNVPRYRKTDSGDQ. The span at 289-309 shows a compositional bias: basic and acidic residues; it reads KKNDPDDGKEFEQIEQLKSDD. A disordered region spans residues 289-328; the sequence is KKNDPDDGKEFEQIEQLKSDDSNGIENNVPRYRKTDSGDQ. Ser310 is modified (phosphoserine).

In terms of assembly, interacts with SLC16A1, SLC16A6 and SLC16A7. In terms of processing, N-glycosylated. As to expression, detected in prostate, mammary gland and erythrocytes (at protein level). Detected in testis, brain, prostate, heart, kidney, liver, mammary gland and lung.

The protein resides in the cell membrane. It localises to the synapse. Plays a role in the outgrowth of motoneurons and in the formation of neuromuscular junctions. Following muscle denervation, promotes nerve terminal sprouting and the formation of additional acetylcholine receptor clusters at synaptic sites without affecting terminal Schwann cell number or morphology. Delays the retraction of terminal sprouts following re-innervation of denervated endplates. Plays a role in targeting the monocarboxylate transporters SLC16A1, SLC16A6 and SLC16A7 to the cell membrane. The protein is Embigin (Emb) of Rattus norvegicus (Rat).